The following is a 511-amino-acid chain: Cobyric acid synthase (511 aa).

The GATase cobBQ-type domain occupies 251–443 (LLDIAIICLP…IHGIFDNDIF (193 aa)). Catalysis depends on cysteine 332, which acts as the Nucleophile. The active site involves histidine 435.

Belongs to the CobB/CobQ family. CobQ subfamily.

It participates in cofactor biosynthesis; adenosylcobalamin biosynthesis. Catalyzes amidations at positions B, D, E, and G on adenosylcobyrinic A,C-diamide. NH(2) groups are provided by glutamine, and one molecule of ATP is hydrogenolyzed for each amidation. This is Cobyric acid synthase from Listeria welshimeri serovar 6b (strain ATCC 35897 / DSM 20650 / CCUG 15529 / CIP 8149 / NCTC 11857 / SLCC 5334 / V8).